Here is a 201-residue protein sequence, read N- to C-terminus: Natural cytotoxicity triggering receptor 3 (201 aa).

Residues Met1–Ala18 form the signal peptide. Residues Leu19–Val126 form the Ig-like domain. Residues Leu19 to Gln133 lie on the Extracellular side of the membrane. Cys39 and Cys108 form a disulfide bridge. 2 N-linked (GlcNAc...) asparagine glycosylation sites follow: Asn42 and Asn121. Residues Leu134–Val154 traverse the membrane as a helical segment. Over Ala155–Gly201 the chain is Cytoplasmic.

Belongs to the natural cytotoxicity receptor (NCR) family. In terms of assembly, homodimer in the unliganted form. Interacts with CD3Z. Interacts with and is activated by binding to NCR3LG1. Interacts with and is activated by binding to BAG6. Interacts with and is inhibited by binding to LGALS3.

The protein resides in the cell membrane. In terms of biological role, cell membrane receptor of natural killer/NK cells that is activated by binding of extracellular ligands including BAG6 and NCR3LG1. Stimulates NK cells cytotoxicity toward neighboring cells producing these ligands. It controls, for instance, NK cells cytotoxicity against tumor cells. Engagement of NCR3 by BAG6 also promotes myeloid dendritic cells (DC) maturation, both through killing DCs that did not acquire a mature phenotype, and inducing the release by NK cells of TNFA and IFNG that promote DC maturation. The chain is Natural cytotoxicity triggering receptor 3 (NCR3) from Macaca mulatta (Rhesus macaque).